The sequence spans 763 residues: Dual specificity tyrosine-phosphorylation-regulated kinase 1A (763 aa).

Position 14 is a phosphoserine (Ser-14). A disordered region spans residues 32–57 (GQMPHSHQYSDRRQPNISDQQVSALS). The segment covering 46–57 (PNISDQQVSALS) has biased composition (polar residues). Phosphotyrosine; by autocatalysis is present on Tyr-111. The disordered stretch occupies residues 115–136 (KKRRHQQGQGDDSSHKKERKVY). A Bipartite nuclear localization signal motif is present at residues 117 to 134 (RRHQQGQGDDSSHKKERK). Residue Tyr-140 is modified to Phosphotyrosine; by autocatalysis. The residue at position 145 (Tyr-145) is a Phosphotyrosine. Tyr-159 bears the Phosphotyrosine; by autocatalysis mark. Residues 159–479 (YEIDSLIGKG…PYYALQHSFF (321 aa)) form the Protein kinase domain. Position 165 to 173 (165 to 173 (IGKGSFGQV)) interacts with ATP. A Phosphotyrosine; by autocatalysis modification is found at Tyr-177. Lys-188 contributes to the ATP binding site. The residue at position 219 (Tyr-219) is a Phosphotyrosine; by autocatalysis. 238 to 241 (FEML) contributes to the ATP binding site. The active-site Proton acceptor is Asp-287. The residue at position 310 (Ser-310) is a Phosphoserine; by autocatalysis. Residues Tyr-319 and Tyr-321 each carry the phosphotyrosine; by autocatalysis modification. Thr-402 carries the phosphothreonine; by autocatalysis modification. The disordered stretch occupies residues 408–442 (TKDGKREYKPPGTRKLHNILGVETGGPGGRRAGES). Phosphotyrosine; by autocatalysis is present on Tyr-449. Positions 485 to 501 (EGTNTSNSVSTSPAMEQ) are enriched in polar residues. Disordered regions lie at residues 485–540 (EGTN…HSGG), 596–679 (NALH…GNQA), and 744–763 (DREE…VASS). Over residues 502–525 (SQSSGTTSSTSSSSGGSSGTSNSG) the composition is skewed to low complexity. Phosphoserine is present on residues Ser-529 and Ser-538. The segment at 595–625 (QNALHHHHGNSSHHHHHHHHHHHHHGQQALG) is histidine-rich domain (HRD). Residues 598–620 (LHHHHGNSSHHHHHHHHHHHHHG) show a composition bias toward basic residues. Residues 634-645 (NSPTNSSSTQDS) are compositionally biased toward polar residues. Low complexity predominate over residues 654-672 (SMTSLSSSTTSSSTSSSST). Residues Ser-748 and Ser-758 each carry the phosphoserine modification. A compositionally biased stretch (polar residues) spans 754 to 763 (CVQQSPVASS).

This sequence belongs to the protein kinase superfamily. CMGC Ser/Thr protein kinase family. MNB/DYRK subfamily. In terms of assembly, interacts with RAD54L2/ARIP4. Interacts with CRY2. Interacts with RANBP9. Interacts with WDR68. Interacts with SIRT1. As to quaternary structure, (Microbial infection) Interacts with human adenovirus 5 E1A protein. Autophosphorylated on numerous tyrosine residues. Can also autophosphorylate on serine and threonine residues (in vitro). In terms of tissue distribution, ubiquitous. Highest levels in skeletal muscle, testis, fetal lung and fetal kidney.

It localises to the nucleus. Its subcellular location is the nucleus speckle. It carries out the reaction L-seryl-[protein] + ATP = O-phospho-L-seryl-[protein] + ADP + H(+). The enzyme catalyses L-threonyl-[protein] + ATP = O-phospho-L-threonyl-[protein] + ADP + H(+). The catalysed reaction is L-tyrosyl-[protein] + ATP = O-phospho-L-tyrosyl-[protein] + ADP + H(+). It catalyses the reaction [DNA-directed RNA polymerase] + ATP = phospho-[DNA-directed RNA polymerase] + ADP + H(+). Inhibited by RANBP9. Inhibited by harmine, leucettamine B and leucettine L41. Dual-specificity kinase which possesses both serine/threonine and tyrosine kinase activities. Exhibits a substrate preference for proline at position P+1 and arginine at position P-3. Plays an important role in double-strand breaks (DSBs) repair following DNA damage. Mechanistically, phosphorylates RNF169 and increases its ability to block accumulation of TP53BP1 at the DSB sites thereby promoting homologous recombination repair (HRR). Also acts as a positive regulator of transcription by acting as a CTD kinase that mediates phosphorylation of the CTD (C-terminal domain) of the large subunit of RNA polymerase II (RNAP II) POLR2A. May play a role in a signaling pathway regulating nuclear functions of cell proliferation. Modulates alternative splicing by phosphorylating the splice factor SRSF6. Has pro-survival function and negatively regulates the apoptotic process. Promotes cell survival upon genotoxic stress through phosphorylation of SIRT1. This in turn inhibits p53/TP53 activity and apoptosis. Phosphorylates SEPTIN4, SEPTIN5 and SF3B1 at 'Thr-434'. This chain is Dual specificity tyrosine-phosphorylation-regulated kinase 1A, found in Homo sapiens (Human).